Consider the following 598-residue polypeptide: Potassium voltage-gated channel subfamily A member 5 (598 aa).

Residues 1-89 (MEIALGPLEN…EEGEGDPGLS (89 aa)) are disordered. Residues 1–195 (MEIALGPLEN…FYQLGDEAME (195 aa)) form a tetramerization domain region. The Cytoplasmic segment spans residues 1–231 (MEIALGPLEN…LIFEYPESSG (231 aa)). Positions 60-69 (RPLPPQPPEL) are enriched in pro residues. Lys205 participates in a covalent cross-link: Glycyl lysine isopeptide (Lys-Gly) (interchain with G-Cter in SUMO). The chain crosses the membrane as a helical span at residues 232 to 253 (SARAIAIVSVLVILISIITFCL). Topologically, residues 254–308 (ETLPEFKDERELLRHPPVPHQPPAAPALGANGSGAVAPASGSTVAPLLPRTLADP) are extracellular. The chain crosses the membrane as a helical span at residues 309–330 (FFIVETTCVIWFTFELLVRFFA). A lipid anchor (S-palmitoyl cysteine) is attached at Cys331. Topologically, residues 331–341 (CPSKAEFSRNI) are cytoplasmic. A helical membrane pass occupies residues 342–362 (MNIIDIVAIFPYFITLGTELA). The Extracellular segment spans residues 363 to 380 (EQQPGGGGGGQNGQQAMS). A helical; Voltage-sensor membrane pass occupies residues 381-401 (LAILRVIRLVRVFRIFKLSRH). At 402–416 (SKGLQILGKTLQASM) the chain is on the cytoplasmic side. An S4-S5 linker region spans residues 403–416 (KGLQILGKTLQASM). A helical transmembrane segment spans residues 417-438 (RELGLLIFFLFIGVILFSSAVY). The Extracellular portion of the chain corresponds to 439–452 (FAEADNQGTHFSSI). The segment at residues 453 to 464 (PDAFWWAVVTMT) is an intramembrane region (helical). A Selectivity filter motif is present at residues 465-470 (TVGYGD). An intramembrane segment occupies 465–472 (TVGYGDMR). A helical transmembrane segment spans residues 480 to 508 (IVGSLCAIAGVLTIALPVPVIVSNFNYFY). Residues 509–598 (HRETDHEEQA…CLDTSRETDL (90 aa)) are Cytoplasmic-facing. The interval 517 to 539 (QAALKEEPGSQSRGTSLDAGGQR) is disordered. Lys521 is covalently cross-linked (Glycyl lysine isopeptide (Lys-Gly) (interchain with G-Cter in SUMO)). A PDZ-binding motif is present at residues 596 to 598 (TDL).

This sequence belongs to the potassium channel family. A (Shaker) (TC 1.A.1.2) subfamily. Kv1.5/KCNA5 sub-subfamily. In terms of assembly, homotetramer and heterotetramer of potassium channel proteins. Interacts with DLG1, which enhances channel currents. Forms a ternary complex with DLG1 and CAV3. Interacts with KCNAB1. Interacts with UBE2I. Interacts with XIRP2; the interaction is required for normal action potential configuration in the heart. Glycosylated. In terms of processing, sumoylated on Lys-205, and Lys-521, preferentially with SUMO3. Sumoylation regulates the voltage sensitivity of the channel.

The protein localises to the cell membrane. The enzyme catalyses K(+)(in) = K(+)(out). Functionally, voltage-gated potassium channel that mediates transmembrane potassium transport in excitable membranes. Forms tetrameric potassium-selective channels through which potassium ions pass in accordance with their electrochemical gradient. The channel alternates between opened and closed conformations in response to the voltage difference across the membrane. Can form functional homotetrameric channels and heterotetrameric channels that contain variable proportions of KCNA1, KCNA2, KCNA4, KCNA5, and possibly other family members as well; channel properties depend on the type of alpha subunits that are part of the channel. Channel properties are modulated by cytoplasmic beta subunits that regulate the subcellular location of the alpha subunits and promote rapid inactivation. Homotetrameric channels display rapid activation and slow inactivation. Required for normal electrical conduction including formation of the infranodal ventricular conduction system and normal action potential configuration, as a result of its interaction with XIRP2. May play a role in regulating the secretion of insulin in normal pancreatic islets. The polypeptide is Potassium voltage-gated channel subfamily A member 5 (KCNA5) (Oryctolagus cuniculus (Rabbit)).